A 78-amino-acid chain; its full sequence is Small ribosomal subunit protein bS16c (78 aa).

This sequence belongs to the bacterial ribosomal protein bS16 family.

The protein localises to the plastid. It is found in the chloroplast. In Amborella trichopoda, this protein is Small ribosomal subunit protein bS16c.